Reading from the N-terminus, the 220-residue chain is Splicing factor U2AF 26 kDa subunit (220 aa).

Alanine 2 carries the N-acetylalanine modification. The segment at glutamate 12–proline 40 adopts a C3H1-type 1 zinc-finger fold. An RRM domain is found at serine 65–valine 147. A C3H1-type 2 zinc finger spans residues aspartate 149–proline 176. The interval leucine 185–phenylalanine 220 is disordered. Residues glycine 189–asparagine 208 show a composition bias toward basic residues. Basic and acidic residues predominate over residues histidine 209–phenylalanine 220.

The protein belongs to the splicing factor SR family. In terms of assembly, interacts with GFI1, U2AF2 and C1QBP. In terms of tissue distribution, isoform 2 is widely expressed. Isoform 3 is highly expressed in heart, brain and lung, lower expressed in thymus and much lower expressed in peripheral blood leukocytes.

It is found in the nucleus. The protein resides in the nucleus speckle. Its subcellular location is the cytoplasm. In terms of biological role, RNA-binding protein that function as a pre-mRNA splicing factor. Plays a critical role in both constitutive and enhancer-dependent splicing by mediating protein-protein interactions and protein-RNA interactions required for accurate 3'-splice site selection. Acts by enhancing the binding of U2AF2 to weak pyrimidine tracts. Also participates in the regulation of alternative pre-mRNA splicing. Activates exon 5 skipping of PTPRC during T-cell activation; an event reversed by GFI1. Binds to RNA at the AG dinucleotide at the 3'-splice site. Shows a preference for AGC or AGA. The sequence is that of Splicing factor U2AF 26 kDa subunit (U2AF1L4) from Homo sapiens (Human).